We begin with the raw amino-acid sequence, 558 residues long: Phosphatidylserine lipase ABHD16A (558 aa).

A run of 2 helical transmembrane segments spans residues 60–80 (ILAL…FAFF) and 93–113 (VVPF…VACL). Residues 114 to 558 (RGIGRWTNPQ…AQNFQMPWHL (445 aa)) are Cytoplasmic-facing. Positions 281-407 (LVICCEGNAG…LVTRTVRQHL (127 aa)) constitute an AB hydrolase-1 domain. Active-site charge relay system residues include Ser-355, Asp-430, and His-507.

It belongs to the AB hydrolase superfamily. ABHD16 family.

The protein resides in the membrane. It carries out the reaction 1-heptadecanoyl-2-(5Z,8Z,11Z,14Z-eicosatetraenoyl)-sn-glycero-3-phosphoserine + H2O = 1-heptadecanoyl-sn-glycero-3-phosphoserine + (5Z,8Z,11Z,14Z)-eicosatetraenoate + H(+). The catalysed reaction is 1-hexadecanoyl-2-(9Z-octadecenoyl)-sn-glycero-3-phospho-L-serine + H2O = 1-hexadecanoyl-sn-glycero-3-phospho-L-serine + (9Z)-octadecenoate + H(+). The enzyme catalyses 1-octadecanoyl-2-(9Z,12Z-octadecadienoyl)-sn-glycero-3-phosphoserine + H2O = 1-octadecanoyl-sn-glycero-3-phosphoserine + (9Z,12Z)-octadecadienoate + H(+). It catalyses the reaction 1-heptadecanoyl-2-(5Z,8Z,11Z,14Z-eicosatetraenoyl)-sn-glycero-3-phosphocholine + H2O = 1-heptadecanoyl-sn-glycero-3-phosphocholine + (5Z,8Z,11Z,14Z)-eicosatetraenoate + H(+). It carries out the reaction 1-hexadecanoyl-2-(9Z-octadecenoyl)-sn-glycero-3-phosphoglycerol + H2O = 1-hexadecanoyl-sn-glycero-3-phosphoglycerol + (9Z)-octadecenoate + H(+). The catalysed reaction is 1-hexadecanoyl-2-(9Z-octadecenoyl)-sn-glycero-3-phospho-(1D-myo-inositol) + H2O = 1-hexadecanoyl-sn-glycero-3-phospho-(1D-myo-inositol) + (9Z)-octadecenoate + H(+). The enzyme catalyses 1-heptadecanoyl-2-(5Z,8Z,11Z,14Z-eicosatetraenoyl)-sn-glycero-3-phosphoethanolamine + H2O = 1-heptadecanoyl-sn-glycero-3-phosphoethanolamine + (5Z,8Z,11Z,14Z)-eicosatetraenoate + H(+). It catalyses the reaction 1-hexadecanoyl-2-(9Z-octadecenoyl)-sn-glycero-3-phospho-(1'-sn-glycerol) + H2O = 1-hexadecanoyl-sn-glycero-3-phospho-(1'-sn-glycerol) + (9Z)-octadecenoate + H(+). It carries out the reaction Hydrolyzes glycerol monoesters of long-chain fatty acids.. The catalysed reaction is 1-tetradecanoylglycerol + H2O = tetradecanoate + glycerol + H(+). The enzyme catalyses 2-hexadecanoylglycerol + H2O = glycerol + hexadecanoate + H(+). It catalyses the reaction 1-(9Z-octadecenoyl)-glycerol + H2O = glycerol + (9Z)-octadecenoate + H(+). It carries out the reaction 2-(9Z-octadecenoyl)-glycerol + H2O = glycerol + (9Z)-octadecenoate + H(+). The catalysed reaction is 2-(9Z,12Z-octadecadienoyl)-glycerol + H2O = (9Z,12Z)-octadecadienoate + glycerol + H(+). The enzyme catalyses 1-(5Z,8Z,11Z,14Z-eicosatetraenoyl)-glycerol + H2O = glycerol + (5Z,8Z,11Z,14Z)-eicosatetraenoate + H(+). It catalyses the reaction 2-(5Z,8Z,11Z,14Z-eicosatetraenoyl)-glycerol + H2O = glycerol + (5Z,8Z,11Z,14Z)-eicosatetraenoate + H(+). It carries out the reaction prostaglandin D2-1-glycerol ester + H2O = prostaglandin D2 + glycerol + H(+). The catalysed reaction is 2-glyceryl-15-deoxy-Delta(12,14)-prostaglandin J2 + H2O = 15-deoxy-Delta(12,14)-prostaglandin J2 + glycerol + H(+). The enzyme catalyses 1-(9Z,12Z-octadecadienoyl)-glycerol + H2O = (9Z,12Z)-octadecadienoate + glycerol + H(+). Functionally, phosphatidylserine (PS) lipase that mediates the hydrolysis of phosphatidylserine to generate lysophosphatidylserine (LPS). LPS constitutes a class of signaling lipids that regulates immunological and neurological processes. Has no activity towards diacylglycerol, triacylglycerol or lysophosphatidylserine lipase. Also has monoacylglycerol lipase activity, with preference for 1-(9Z,12Z-octadecadienoyl)-glycerol (1-LG) and 2-glyceryl-15-deoxy-Delta(12,14)-prostaglandin J2 (15d-PGJ(2)-G). The protein is Phosphatidylserine lipase ABHD16A of Macaca fascicularis (Crab-eating macaque).